Reading from the N-terminus, the 236-residue chain is Uridylate kinase (236 aa).

ATP is bound at residue 10-13 (KLSG). Gly52 provides a ligand contact to UMP. Residues Gly53 and Arg57 each coordinate ATP. UMP contacts are provided by residues Asp72 and 133-140 (TGNPFFTT). The ATP site is built by Thr160, Tyr166, and Asp169.

Belongs to the UMP kinase family. In terms of assembly, homohexamer.

Its subcellular location is the cytoplasm. It carries out the reaction UMP + ATP = UDP + ADP. The protein operates within pyrimidine metabolism; CTP biosynthesis via de novo pathway; UDP from UMP (UMPK route): step 1/1. With respect to regulation, inhibited by UTP. In terms of biological role, catalyzes the reversible phosphorylation of UMP to UDP. This is Uridylate kinase from Polaromonas naphthalenivorans (strain CJ2).